We begin with the raw amino-acid sequence, 324 residues long: Probable UDP-sugar transporter protein SLC35A4 (324 aa).

At 1–18 the chain is on the cytoplasmic side; it reads MSVEDGGLPGLGGPGQAR. A helical transmembrane segment spans residues 19–39; the sequence is WTLMLLLSTATYGAHAPLLAL. Residues 40-52 lie on the Lumenal side of the membrane; the sequence is CHVDGRVPFRPSS. A helical membrane pass occupies residues 53–73; that stretch reads AVLLTELTKLLLCALSLLVGW. The Cytoplasmic portion of the chain corresponds to 74 to 85; sequence QAWPPRTPPWRQ. Residues 86–106 traverse the membrane as a helical segment; the sequence is AAPFALSALLYGANNNLVIHL. Residues 107–140 lie on the Lumenal side of the membrane; that stretch reads QHYMDPSTYQVLSNLKIGSTALFYCLCLRRRLSA. A helical membrane pass occupies residues 141-161; it reads RQGLALLLLMAAGACYAAGGL. Residues 162–177 lie on the Cytoplasmic side of the membrane; that stretch reads RDPGSPLPESPSTAAS. A helical transmembrane segment spans residues 178 to 198; that stretch reads GPVPLHVTAPGLLLLLLYCLI. Residues 199-214 are Lumenal-facing; the sequence is SGLSSVYTELLLKRQR. Residues 215–235 form a helical membrane-spanning segment; the sequence is LPLALQNLFLYTFGVLLNLGL. The Cytoplasmic portion of the chain corresponds to 236–248; that stretch reads HAGGGPGPGLLEG. A helical transmembrane segment spans residues 249-271; that stretch reads FSGWAALVVLSQALNGLLMSAVM. At 272–279 the chain is on the lumenal side; the sequence is KHGSSITR. A helical transmembrane segment spans residues 280 to 300; the sequence is LFVVSCSLVVNAVLSAALLRL. The Cytoplasmic segment spans residues 301–324; sequence QLTAAFFLAALLIGLAVHLYYGSR.

This sequence belongs to the nucleotide-sugar transporter family. SLC35A subfamily. As to quaternary structure, found in a complex with SLC35A2 and SLC35A3.

It localises to the golgi apparatus membrane. The catalysed reaction is CDP-L-ribitol(in) + CDP(out) = CDP-L-ribitol(out) + CDP(in). In terms of biological role, mediates the transport of CDP-ribitol. Does not exhibit CMP-sialic acid, UDP-galactose and UDP-N-acetylglucosamine transport activity. The chain is Probable UDP-sugar transporter protein SLC35A4 from Sus scrofa (Pig).